The following is a 425-amino-acid chain: Inner membrane protein YqcE (425 aa).

The Cytoplasmic segment spans residues 1–8 (MQHNSYRR). Residues 9-29 (WITLAIISFSGGVSFDLAYLR) form a helical membrane-spanning segment. The Periplasmic portion of the chain corresponds to 30–48 (YIYQIPMAKFMGFSNTEIG). A helical membrane pass occupies residues 49-69 (LIMSTFGIAAIILYAPSGVIA). Residues 70–75 (DKFSHR) lie on the Cytoplasmic side of the membrane. 2 helical membrane-spanning segments follow: residues 76-96 (KMIT…ATYP) and 97-117 (PLWV…LMLW). Over 118-138 (SVSIKAASLLGDHSEQGKIMG) the chain is Cytoplasmic. Residues 139–159 (WMEGLRGVGVMSLAVFTMWVF) traverse the membrane as a helical segment. Over 160-171 (SRFAPDDSTSLK) the chain is Periplasmic. The chain crosses the membrane as a helical span at residues 172 to 192 (TVIIIYSVVYILLGILCWFFV). At 193 to 219 (SDNNNLRSANNEEKQSFQLSDILAVLR) the chain is on the cytoplasmic side. A helical membrane pass occupies residues 220-240 (ISTTWYCSMVIFGVFTIYAIL). Residues 241-259 (SYSTNYLTEMYGMSLVAAS) are Periplasmic-facing. The chain crosses the membrane as a helical span at residues 260-280 (YMGIVINKIFRALCGPLGGII). Topologically, residues 281–291 (TTYSKVKSPTR) are cytoplasmic. A helical transmembrane segment spans residues 292 to 312 (VIQILSVLGLLTLTALLVTNS). Position 313 (Asn313) is a topological domain, periplasmic. A helical membrane pass occupies residues 314–334 (PQSVAMGIGLILLLGFTCYAS). Residues 335–354 (RGLYWACPGEARTPSYIMGT) are Cytoplasmic-facing. Residues 355–375 (TVGICSVIGFLPDVFVYPIIG) traverse the membrane as a helical segment. Over 376 to 388 (HWQDTLPAAEAYR) the chain is Periplasmic. Residues 389-409 (NMWLMGMAALGMVIVFTFLLF) traverse the membrane as a helical segment. The Cytoplasmic segment spans residues 410–425 (QKIRTADSAPAMASSK).

To E.coli YihN.

Its subcellular location is the cell inner membrane. The chain is Inner membrane protein YqcE (yqcE) from Escherichia coli (strain K12).